Consider the following 234-residue polypeptide: Opacity protein opA51 (234 aa).

Ala1 is a signal peptide.

The protein belongs to the opacity porin family.

It localises to the cell outer membrane. Its function is as follows. Implicated in a number of adherence functions. OPA proteins are implicated in pathogenesis and are subject to phase variation. In Neisseria gonorrhoeae, this protein is Opacity protein opA51 (opaB).